The sequence spans 166 residues: ATP synthase subunit b (166 aa).

A helical transmembrane segment spans residues leucine 10–phenylalanine 30.

Belongs to the ATPase B chain family. F-type ATPases have 2 components, F(1) - the catalytic core - and F(0) - the membrane proton channel. F(1) has five subunits: alpha(3), beta(3), gamma(1), delta(1), epsilon(1). F(0) has three main subunits: a(1), b(2) and c(10-14). The alpha and beta chains form an alternating ring which encloses part of the gamma chain. F(1) is attached to F(0) by a central stalk formed by the gamma and epsilon chains, while a peripheral stalk is formed by the delta and b chains.

It localises to the cell inner membrane. Its function is as follows. F(1)F(0) ATP synthase produces ATP from ADP in the presence of a proton or sodium gradient. F-type ATPases consist of two structural domains, F(1) containing the extramembraneous catalytic core and F(0) containing the membrane proton channel, linked together by a central stalk and a peripheral stalk. During catalysis, ATP synthesis in the catalytic domain of F(1) is coupled via a rotary mechanism of the central stalk subunits to proton translocation. In terms of biological role, component of the F(0) channel, it forms part of the peripheral stalk, linking F(1) to F(0). The sequence is that of ATP synthase subunit b from Parabacteroides distasonis (strain ATCC 8503 / DSM 20701 / CIP 104284 / JCM 5825 / NCTC 11152).